Reading from the N-terminus, the 648-residue chain is MKNEPTYSLLNAINYPKDLRQLSVDQLPEVCEELRQDIIKELSCNPGHFAASLGVVELTVALHYVYNTPYDRIVWDVGHQAYGHKILTGRREAFSTNRKLGGIRPFPSPEESEYDTFTCGHASNSISAALGMAVAAERKGEKDRHVVAVIGDGSMSGGLAFEGLNNASSTANNLLIILNDNDMAIDRSVGGMKQYLFNLTTSNRYNQLRFKTSRLLFKMGLLNEERRKALIRLGNSLKSLAAQQQNIFEGMNIRYFGPIDGHDVKNIARILHDIKDMQGPKILHLHTIKGKGFGPAEKQATIWHAPGKFDPVTGKRIVANTDGMPPLFQDVFGHTLVELAEKNKRIMGVTPAMPSGCSMNMLMDRMPDRAFDVGIAEGHAVTFSGGMAKDGLLPFCNIYSSFMQRAYDNIIHDVAIQKLNVVFCLDRAGLVGEDGPTHHGVFDMAYLRPIPNLTISSPMDEHELRRLMYTAQLPDKGPFAIRYPRGRGSLVDWECPLEEIPVGKGRKLKDGNDLAVITIGPIGKLAARAIERAEADTGISVAHYDLRFLKPLDEELLHEVGKKFRHIVTIEDGIIKGGMGCAILEFMADNGYYPEIRRIGVPDQFIEHGSVQQLYHLCGMDEEGIYKVITKNKLRMDAPVESCMATHS.

Thiamine diphosphate-binding positions include H79 and 120-122; that span reads GHA. D152 is a binding site for Mg(2+). Residues 153–154, N181, F293, and E377 contribute to the thiamine diphosphate site; that span reads GS. Residue N181 coordinates Mg(2+).

It belongs to the transketolase family. DXPS subfamily. In terms of assembly, homodimer. Mg(2+) serves as cofactor. The cofactor is thiamine diphosphate.

The catalysed reaction is D-glyceraldehyde 3-phosphate + pyruvate + H(+) = 1-deoxy-D-xylulose 5-phosphate + CO2. The protein operates within metabolic intermediate biosynthesis; 1-deoxy-D-xylulose 5-phosphate biosynthesis; 1-deoxy-D-xylulose 5-phosphate from D-glyceraldehyde 3-phosphate and pyruvate: step 1/1. Functionally, catalyzes the acyloin condensation reaction between C atoms 2 and 3 of pyruvate and glyceraldehyde 3-phosphate to yield 1-deoxy-D-xylulose-5-phosphate (DXP). This Bacteroides fragilis (strain ATCC 25285 / DSM 2151 / CCUG 4856 / JCM 11019 / LMG 10263 / NCTC 9343 / Onslow / VPI 2553 / EN-2) protein is 1-deoxy-D-xylulose-5-phosphate synthase.